Here is a 270-residue protein sequence, read N- to C-terminus: Checkpoint signal transducer rad25 (270 aa).

A phosphoserine mark is found at Ser-234 and Ser-253. The disordered stretch occupies residues 240–270; sequence QSAKEEAPAAAAASENEHPEPKESTTDTVKA. The segment covering 254-270 has biased composition (basic and acidic residues); the sequence is ENEHPEPKESTTDTVKA.

It belongs to the 14-3-3 family. In terms of assembly, interacts with rad24. Interacts with byr2.

It is found in the cytoplasm. In terms of biological role, acts in cell cycle and stress checkpoint signaling by sequestering signal transducers regulated by the checkpoints. Required for the DNA damage checkpoint that ensures that DNA damage is repaired before mitosis is attempted. Sequesters byr2 in the cytoplasm to prevent its translocation to the plasma membrane. The sequence is that of Checkpoint signal transducer rad25 from Schizosaccharomyces pombe (strain 972 / ATCC 24843) (Fission yeast).